Reading from the N-terminus, the 431-residue chain is Serine/threonine-protein kinase Sgk1 (431 aa).

The necessary for localization to the mitochondria stretch occupies residues 1–60; the sequence is MTVKTEAAKGTLTYSRMRGMVAILIAFMKQRRMGLNDFIQKIANNSYACKHPEVQSILKI. Residues 66-92 form a disordered region; the sequence is PELMNANPSPPPSPSQQINLGPSSNPH. Phosphoserine is present on Ser74. Residue Ser78 is modified to Phosphoserine; by MAPK7. The span at 81–91 shows a compositional bias: polar residues; it reads QQINLGPSSNP. One can recognise a Protein kinase domain in the interval 98-355; sequence FHFLKVIGKG…FMEIKSHVFF (258 aa). Residues 104–112 and Lys127 contribute to the ATP site; that span reads IGKGSFGKV. The Nuclear localization signal motif lies at 131-141; sequence KKAILKKKEEK. Asp222 (proton acceptor) is an active-site residue. Residue Thr256 is modified to Phosphothreonine; by PDPK1. In terms of domain architecture, AGC-kinase C-terminal spans 356 to 431; sequence SLINWDDLIN…SYAPPTDSFL (76 aa). Thr369 carries the phosphothreonine; by PKA modification. Ser397, Ser401, and Ser422 each carry phosphoserine.

The protein belongs to the protein kinase superfamily. AGC Ser/Thr protein kinase family. As to quaternary structure, homodimer; disulfide-linked. Forms a trimeric complex with FBXW7 and NOTCH1. Interacts with MAPK3/ERK1, MAPK1/ERK2, MAP2K1/MEK1, MAP2K2/MEK2, NEDD4, NEDD4L, MAPT/TAU, MAPK7, CREB1, SLC9A3R2/NHERF2 and KCNJ1/ROMK1. Associates with the mammalian target of rapamycin complex 2 (mTORC2) via an interaction with MAPKAP1/SIN1. In terms of processing, regulated by phosphorylation. Activated by phosphorylation on Ser-422 by mTORC2, transforming it into a substrate for PDPK1 which phosphorylates it on Thr-256. Phosphorylation on Ser-397 and Ser-401 are also essential for its activity. Phosphorylation on Ser-78 by MAPK7 is required for growth factor-induced cell cycle progression. Ubiquitinated by NEDD4L; which promotes proteasomal degradation. Ubiquitinated by SYVN1 at the endoplasmic reticulum; which promotes rapid proteasomal degradation and maintains a high turnover rate in resting cells.

Its subcellular location is the cytoplasm. The protein resides in the nucleus. It localises to the endoplasmic reticulum membrane. The protein localises to the cell membrane. It is found in the mitochondrion. The enzyme catalyses L-seryl-[protein] + ATP = O-phospho-L-seryl-[protein] + ADP + H(+). The catalysed reaction is L-threonyl-[protein] + ATP = O-phospho-L-threonyl-[protein] + ADP + H(+). Two specific sites, one in the kinase domain (Thr-256) and the other in the C-terminal regulatory region (Ser-422), need to be phosphorylated for its full activation. Phosphorylation at Ser-397 and Ser-401 are also essential for its activity. Activated by WNK1, WNK2, WNK3 and WNK4; which promote phosphorylation by mTORC2. Serine/threonine-protein kinase which is involved in the regulation of a wide variety of ion channels, membrane transporters, cellular enzymes, transcription factors, neuronal excitability, cell growth, proliferation, survival, migration and apoptosis. Plays an important role in cellular stress response. Contributes to regulation of renal Na(+) retention, renal K(+) elimination, salt appetite, gastric acid secretion, intestinal Na(+)/H(+) exchange and nutrient transport, insulin-dependent salt sensitivity of blood pressure, salt sensitivity of peripheral glucose uptake, cardiac repolarization and memory consolidation. Up-regulates Na(+) channels: SCNN1A/ENAC, SCN5A and ASIC1/ACCN2, K(+) channels: KCNJ1/ROMK1, KCNA1-5, KCNQ1-5 and KCNE1, epithelial Ca(2+) channels: TRPV5 and TRPV6, chloride channels: BSND, CLCN2 and CFTR, glutamate transporters: SLC1A3/EAAT1, SLC1A2 /EAAT2, SLC1A1/EAAT3, SLC1A6/EAAT4 and SLC1A7/EAAT5, amino acid transporters: SLC1A5/ASCT2, SLC38A1/SN1 and SLC6A19, creatine transporter: SLC6A8, Na(+)/dicarboxylate cotransporter: SLC13A2/NADC1, Na(+)-dependent phosphate cotransporter: SLC34A2/NAPI-2B, glutamate receptor: GRIK2/GLUR6. Up-regulates carriers: SLC9A3/NHE3, SLC12A1/NKCC2, SLC12A3/NCC, SLC5A3/SMIT, SLC2A1/GLUT1, SLC5A1/SGLT1 and SLC15A2/PEPT2. Regulates enzymes: GSK3A/B, PMM2 and Na(+)/K(+) ATPase, and transcription factors: CTNNB1 and nuclear factor NF-kappa-B. Stimulates sodium transport into epithelial cells by enhancing the stability and expression of SCNN1A/ENAC. This is achieved by phosphorylating the NEDD4L ubiquitin E3 ligase, promoting its interaction with 14-3-3 proteins, thereby preventing it from binding to SCNN1A/ENAC and targeting it for degradation. Regulates store-operated Ca(+2) entry (SOCE) by stimulating ORAI1 and STIM1. Regulates KCNJ1/ROMK1 directly via its phosphorylation or indirectly via increased interaction with SLC9A3R2/NHERF2. Phosphorylates MDM2 and activates MDM2-dependent ubiquitination of p53/TP53. Phosphorylates MAPT/TAU and mediates microtubule depolymerization and neurite formation in hippocampal neurons. Phosphorylates SLC2A4/GLUT4 and up-regulates its activity. Phosphorylates APBB1/FE65 and promotes its localization to the nucleus. Phosphorylates MAPK1/ERK2 and activates it by enhancing its interaction with MAP2K1/MEK1 and MAP2K2/MEK2. Phosphorylates FBXW7 and plays an inhibitory role in the NOTCH1 signaling. Phosphorylates FOXO1 resulting in its relocalization from the nucleus to the cytoplasm. Phosphorylates FOXO3, promoting its exit from the nucleus and interference with FOXO3-dependent transcription. Phosphorylates BRAF and MAP3K3/MEKK3 and inhibits their activity. Phosphorylates SLC9A3/NHE3 in response to dexamethasone, resulting in its activation and increased localization at the cell membrane. Phosphorylates CREB1. Necessary for vascular remodeling during angiogenesis. The protein is Serine/threonine-protein kinase Sgk1 (SGK1) of Macaca fascicularis (Crab-eating macaque).